The sequence spans 476 residues: Sulfate adenylyltransferase subunit 1 (476 aa).

The tr-type G domain occupies 17-232 (KDLLRLLTAG…LETVHIDSDN (216 aa)). Residues 26–33 (GSVDDGKS) form a G1 region. 26 to 33 (GSVDDGKS) is a binding site for GTP. The tract at residues 84–88 (GITID) is G2. The tract at residues 105–108 (DTPG) is G3. GTP-binding positions include 105-109 (DTPGH) and 160-163 (NKMD). Residues 160–163 (NKMD) are G4. Residues 197–199 (SAL) form a G5 region.

This sequence belongs to the TRAFAC class translation factor GTPase superfamily. Classic translation factor GTPase family. CysN/NodQ subfamily. As to quaternary structure, heterodimer composed of CysD, the smaller subunit, and CysN.

It carries out the reaction sulfate + ATP + H(+) = adenosine 5'-phosphosulfate + diphosphate. The protein operates within sulfur metabolism; hydrogen sulfide biosynthesis; sulfite from sulfate: step 1/3. Functionally, with CysD forms the ATP sulfurylase (ATPS) that catalyzes the adenylation of sulfate producing adenosine 5'-phosphosulfate (APS) and diphosphate, the first enzymatic step in sulfur assimilation pathway. APS synthesis involves the formation of a high-energy phosphoric-sulfuric acid anhydride bond driven by GTP hydrolysis by CysN coupled to ATP hydrolysis by CysD. This chain is Sulfate adenylyltransferase subunit 1, found in Bacteroides fragilis (strain YCH46).